The sequence spans 200 residues: Large ribosomal subunit protein uL4 (200 aa).

Positions 38 to 80 (GRQGSKQQKTRSDVSGGGKRPWRQKGTGRARAGTTRGPIWRGG) are disordered.

Belongs to the universal ribosomal protein uL4 family. In terms of assembly, part of the 50S ribosomal subunit.

In terms of biological role, one of the primary rRNA binding proteins, this protein initially binds near the 5'-end of the 23S rRNA. It is important during the early stages of 50S assembly. It makes multiple contacts with different domains of the 23S rRNA in the assembled 50S subunit and ribosome. Its function is as follows. Forms part of the polypeptide exit tunnel. In Stutzerimonas stutzeri (strain A1501) (Pseudomonas stutzeri), this protein is Large ribosomal subunit protein uL4.